The following is a 339-amino-acid chain: Ketol-acid reductoisomerase (NADP(+)) (339 aa).

The KARI N-terminal Rossmann domain maps to 1-182 (MRVYYDRDAD…GGGRSGIIET (182 aa)). Residues 24–27 (YGSQ), K48, S51, T53, and 83–86 (DELQ) contribute to the NADP(+) site. The active site involves H108. NADP(+) is bound at residue G134. Residues 183-328 (NFREECETDL…AKLRGMMPWI (146 aa)) enclose the KARI C-terminal knotted domain. Mg(2+) is bound by residues D191, E195, E227, and E231. Residue S252 participates in substrate binding.

The protein belongs to the ketol-acid reductoisomerase family. It depends on Mg(2+) as a cofactor.

The catalysed reaction is (2R)-2,3-dihydroxy-3-methylbutanoate + NADP(+) = (2S)-2-acetolactate + NADPH + H(+). The enzyme catalyses (2R,3R)-2,3-dihydroxy-3-methylpentanoate + NADP(+) = (S)-2-ethyl-2-hydroxy-3-oxobutanoate + NADPH + H(+). Its pathway is amino-acid biosynthesis; L-isoleucine biosynthesis; L-isoleucine from 2-oxobutanoate: step 2/4. It functions in the pathway amino-acid biosynthesis; L-valine biosynthesis; L-valine from pyruvate: step 2/4. Its function is as follows. Involved in the biosynthesis of branched-chain amino acids (BCAA). Catalyzes an alkyl-migration followed by a ketol-acid reduction of (S)-2-acetolactate (S2AL) to yield (R)-2,3-dihydroxy-isovalerate. In the isomerase reaction, S2AL is rearranged via a Mg-dependent methyl migration to produce 3-hydroxy-3-methyl-2-ketobutyrate (HMKB). In the reductase reaction, this 2-ketoacid undergoes a metal-dependent reduction by NADPH to yield (R)-2,3-dihydroxy-isovalerate. This Rhizobium rhizogenes (strain K84 / ATCC BAA-868) (Agrobacterium radiobacter) protein is Ketol-acid reductoisomerase (NADP(+)).